The sequence spans 351 residues: N-acetyl-gamma-glutamyl-phosphate reductase (351 aa).

Residue Cys-154 is part of the active site.

It belongs to the NAGSA dehydrogenase family. Type 1 subfamily.

The protein resides in the cytoplasm. It catalyses the reaction N-acetyl-L-glutamate 5-semialdehyde + phosphate + NADP(+) = N-acetyl-L-glutamyl 5-phosphate + NADPH + H(+). It participates in amino-acid biosynthesis; L-arginine biosynthesis; N(2)-acetyl-L-ornithine from L-glutamate: step 3/4. Functionally, catalyzes the NADPH-dependent reduction of N-acetyl-5-glutamyl phosphate to yield N-acetyl-L-glutamate 5-semialdehyde. This is N-acetyl-gamma-glutamyl-phosphate reductase from Prochlorococcus marinus (strain MIT 9301).